Here is a 170-residue protein sequence, read N- to C-terminus: Pollen-specific protein C13 (170 aa).

Residues 1–27 form the signal peptide; the sequence is MASVPAPATTTAAVILCLCVVLSCAAA. Disulfide bonds link Cys-43–Cys-114, Cys-46–Cys-155, and Cys-67–Cys-102. N-linked (GlcNAc...) asparagine glycosylation is present at Asn-53.

This sequence belongs to the Ole e I family. In terms of tissue distribution, pollen.

This Zea mays (Maize) protein is Pollen-specific protein C13 (MGS1).